The chain runs to 273 residues: F-actin-capping protein subunit alpha (273 aa).

Belongs to the F-actin-capping protein alpha subunit family. As to quaternary structure, component of the F-actin capping complex, composed of a heterodimer of an alpha and a beta subunit.

The protein resides in the cytoplasm. The protein localises to the cytoskeleton. It localises to the actin patch. Its function is as follows. F-actin-capping proteins bind in a Ca(2+)-independent manner to the fast growing ends of actin filaments (barbed end) thereby blocking the exchange of subunits at these ends. Unlike other capping proteins (such as gelsolin and severin), these proteins do not sever actin filaments. The protein is F-actin-capping protein subunit alpha (fac-1) of Neurospora crassa (strain ATCC 24698 / 74-OR23-1A / CBS 708.71 / DSM 1257 / FGSC 987).